Here is a 308-residue protein sequence, read N- to C-terminus: MIDILLLGCGGGMPMPNRFLSATLINYRGRKILVDCGEGTQVSMRISNTGFKSIDIICITHIHGDHIVGLPGLLGTIGNSGRTEPITIIGPEGIRETVEKLRVIANWLPYEINIIENPKDTFKLFDGNINLDVDISVLELDHSSPCIGYCFYFKRQPKFDVEKAEKNKVPKILWNRLQRNEENIVLDGALYTNDMVTGEERKGIKVSIITDTRPIKNIIEFINDSDYFICEGTYGEDKDLPKAIKNKHMTFREAADLALKGNVKKLLLTHFGTAMNEPEEYLNNANEVFDKTIIGFDRYKTTLNFNED.

Residues His-61, His-63, Asp-65, His-66, His-142, Asp-211, and His-270 each coordinate Zn(2+). The active-site Proton acceptor is Asp-65.

It belongs to the RNase Z family. As to quaternary structure, homodimer. Zn(2+) is required as a cofactor.

It catalyses the reaction Endonucleolytic cleavage of RNA, removing extra 3' nucleotides from tRNA precursor, generating 3' termini of tRNAs. A 3'-hydroxy group is left at the tRNA terminus and a 5'-phosphoryl group is left at the trailer molecule.. In terms of biological role, zinc phosphodiesterase, which displays some tRNA 3'-processing endonuclease activity. Probably involved in tRNA maturation, by removing a 3'-trailer from precursor tRNA. This is Ribonuclease Z from Clostridium beijerinckii (strain ATCC 51743 / NCIMB 8052) (Clostridium acetobutylicum).